The sequence spans 360 residues: MSADRINLLRTKVFDKSKWMQLPRDVVIGHDVIEQIPAVCEDLALGDSVLIVSGGQTRDIAGKRVEALLAGSYDVVTFAANDGNPFETIRKAEEAAATAGFVIGVGGGRVIDTAKIASYNTDRHFISVPTAASHDGIASSRASVPTADGNVSLAAEPPIAVVADTAVIASAPHRLLASGCADIIANYTAILDWELSHRLRGEPLSEYALTLSRMTAEILFKNADLIKPHSEESAWLVTKALVSSGVAMSIAGSSRPGSGGEHKFSHALEKLAPGKGLHGEKCGIGAIITMYLHGGDWEGIRDSLKKIGAPTTPAAIGVDDETAVAALLAARTIRPERFTILDMGLTEESARDLVKMLYRE.

Residues 108-112 (GRVID) and 130-133 (TAAS) contribute to the NAD(+) site. Residue D135 coordinates substrate. S139 provides a ligand contact to NAD(+). Residue D182 coordinates substrate. Zn(2+) contacts are provided by D182 and H262. Substrate is bound at residue H266. Zn(2+) is bound at residue H278.

It belongs to the glycerol-1-phosphate dehydrogenase family. It depends on Zn(2+) as a cofactor.

It is found in the cytoplasm. The catalysed reaction is sn-glycerol 1-phosphate + NAD(+) = dihydroxyacetone phosphate + NADH + H(+). It carries out the reaction sn-glycerol 1-phosphate + NADP(+) = dihydroxyacetone phosphate + NADPH + H(+). Its pathway is membrane lipid metabolism; glycerophospholipid metabolism. Functionally, catalyzes the NAD(P)H-dependent reduction of dihydroxyacetonephosphate (DHAP or glycerone phosphate) to glycerol 1-phosphate (G1P). The G1P thus generated is used as the glycerophosphate backbone of phospholipids in the cellular membranes of Archaea. In Methanoculleus marisnigri (strain ATCC 35101 / DSM 1498 / JR1), this protein is Glycerol-1-phosphate dehydrogenase [NAD(P)+].